Here is a 381-residue protein sequence, read N- to C-terminus: MTEFWLISAPGDKTCQQTWDKMNMATAESNNLSTNNKFNIPELKVGTLDVLVGLSDELAKLDTFVESVVKKIAQYMTDVLEDSRDKVQENLLANGVDLVTYITRFQWDMAKYPIKQSLKSISEIMSKQVTQIDNDLKARASAYNSLKGSLQSLERKNVGSLLTRSLADIVKKEDFVLDSEYLTTLLVIVSKTNYPEWQKTYETLSEMVVPRSTKLLFEDQESGLFSVTLFTKAIDDFKQQARENKFMVRDFLYNEEEMKADKEEMTRLSTDKKKQFGPLVRWLKVNFSETFIAWIHIKALRVFTESVLRYGLPVNFQAMLLQPNKKNVKKLREVLKDLYKHLDSSAAVIDGSVDIPGLNLSQQEYYPYVYYKIDVNLLELK.

Thr2 is subject to N-acetylthreonine.

It belongs to the V-ATPase C subunit family. In terms of assembly, V-ATPase is a heteromultimeric enzyme made up of two complexes: the ATP-hydrolytic V1 complex and the proton translocation V0 complex. The V1 complex consists of three catalytic AB heterodimers that form a heterohexamer, three peripheral stalks each consisting of EG heterodimers, one central rotor including subunits D and F, and the regulatory subunits C and H. The proton translocation complex V0 consists of the proton transport subunit a, a ring of proteolipid subunits c9c'', rotary subunit d, subunits e and f, and two accessory subunits.

In terms of biological role, subunit of the V1 complex of vacuolar(H+)-ATPase (V-ATPase), a multisubunit enzyme composed of a peripheral complex (V1) that hydrolyzes ATP and a membrane integral complex (V0) that translocates protons. V-ATPase is responsible for acidifying and maintaining the pH of intracellular compartments and in some cell types, is targeted to the plasma membrane, where it is responsible for acidifying the extracellular environment. Subunit C is necessary for the assembly of the catalytic sector of the enzyme and is likely to have a specific function in its catalytic activity. The chain is V-type proton ATPase subunit C 1-B (atp6v1c1b) from Danio rerio (Zebrafish).